The following is a 350-amino-acid chain: Small ribosomal subunit biogenesis GTPase RsgA (350 aa).

Polar residues predominate over residues 1-17 (MSKNKLSKGQQRRVNAN). The disordered stretch occupies residues 1–24 (MSKNKLSKGQQRRVNANHQRRLKT). One can recognise a CP-type G domain in the interval 104–273 (TSVLTRPDFY…VIDSPGVREF (170 aa)). GTP is bound by residues 160–163 (NKID) and 214–222 (GQSGVGKSS). 4 residues coordinate Zn(2+): Cys297, Cys302, His304, and Cys310.

This sequence belongs to the TRAFAC class YlqF/YawG GTPase family. RsgA subfamily. Monomer. Associates with 30S ribosomal subunit, binds 16S rRNA. It depends on Zn(2+) as a cofactor.

It localises to the cytoplasm. In terms of biological role, one of several proteins that assist in the late maturation steps of the functional core of the 30S ribosomal subunit. Helps release RbfA from mature subunits. May play a role in the assembly of ribosomal proteins into the subunit. Circularly permuted GTPase that catalyzes slow GTP hydrolysis, GTPase activity is stimulated by the 30S ribosomal subunit. The sequence is that of Small ribosomal subunit biogenesis GTPase RsgA from Salmonella schwarzengrund (strain CVM19633).